The chain runs to 349 residues: Protein Wnt-7b (349 aa).

Positions 1-24 (MHRNFRKWIFYVFLCFGVIYVKLG) are cleaved as a signal peptide. Cystine bridges form between Cys-73–Cys-84, Cys-123–Cys-131, Cys-133–Cys-152, Cys-200–Cys-214, and Cys-202–Cys-209. N-linked (GlcNAc...) asparagine glycosylation is found at Asn-83 and Asn-127. Ser-206 carries the O-palmitoleoyl serine; by PORCN lipid modification. The disordered linker stretch occupies residues 238–266 (VEVVRASRLRQPTFLKIKQIKSYQKPMET). 6 disulfides stabilise this stretch: Cys-278–Cys-309, Cys-294–Cys-304, Cys-308–Cys-348, Cys-324–Cys-339, Cys-326–Cys-336, and Cys-331–Cys-332. Asn-295 carries an N-linked (GlcNAc...) asparagine glycan.

It belongs to the Wnt family. Palmitoleoylation is required for efficient binding to frizzled receptors. Depalmitoleoylation leads to Wnt signaling pathway inhibition. Expressed in differentiating lens fiber cells.

It localises to the secreted. The protein resides in the extracellular space. It is found in the extracellular matrix. Its function is as follows. Ligand for members of the frizzled family of seven transmembrane receptors that functions in the canonical Wnt/beta-catenin signaling pathway. Required for normal fusion of the chorion and the allantois during placenta development. Required for central nervous system (CNS) angiogenesis and blood-brain barrier regulation. This is Protein Wnt-7b (WNT7B) from Gallus gallus (Chicken).